We begin with the raw amino-acid sequence, 226 residues long: Elongation factor 1-delta (226 aa).

Residues serine 82–lysine 131 form a disordered region. The segment covering alanine 97 to glutamate 113 has biased composition (acidic residues). Basic and acidic residues predominate over residues glutamate 114–alanine 124.

It belongs to the EF-1-beta/EF-1-delta family. As to quaternary structure, EF-1 is composed of 4 subunits: alpha, beta (1B-alpha=beta'), delta (1B-beta), and gamma (1B-gamma).

Its function is as follows. EF-1-beta and EF-1-beta' stimulate the exchange of GDP bound to EF-1-alpha to GTP. The chain is Elongation factor 1-delta from Spuriopimpinella brachycarpa (Chamnamul).